Here is a 1029-residue protein sequence, read N- to C-terminus: E3 ubiquitin-protein ligase UPL6 (1029 aa).

The disordered stretch occupies residues 1-20 (MFFSGDPSTRKRVDLGGRST). The span at 8 to 20 (STRKRVDLGGRST) shows a compositional bias: basic and acidic residues. Residues 45 to 74 (QNSAALKIQKFFRGRRSMAIERSKVRHDFC) enclose the IQ domain. The 342-residue stretch at 688–1029 (SEDDLRSSIR…ISAEAGFDLS (342 aa)) folds into the HECT domain. Cys-997 functions as the Glycyl thioester intermediate in the catalytic mechanism.

It belongs to the UPL family.

The enzyme catalyses S-ubiquitinyl-[E2 ubiquitin-conjugating enzyme]-L-cysteine + [acceptor protein]-L-lysine = [E2 ubiquitin-conjugating enzyme]-L-cysteine + N(6)-ubiquitinyl-[acceptor protein]-L-lysine.. Its pathway is protein modification; protein ubiquitination. Probable E3 ubiquitin-protein ligase which mediates ubiquitination and subsequent proteasomal degradation of target proteins. In Arabidopsis thaliana (Mouse-ear cress), this protein is E3 ubiquitin-protein ligase UPL6 (UPL6).